The primary structure comprises 142 residues: Bacilliredoxin ABC2448 (142 aa).

This sequence belongs to the bacilliredoxin family.

This chain is Bacilliredoxin ABC2448, found in Shouchella clausii (strain KSM-K16) (Alkalihalobacillus clausii).